A 71-amino-acid polypeptide reads, in one-letter code: Small ribosomal subunit protein bS21 (71 aa).

A disordered region spans residues 39 to 71 (EKPTQERKRKAAAAVKRQMRRTSRDVTKRKRLY). A compositionally biased stretch (basic residues) spans 45 to 71 (RKRKAAAAVKRQMRRTSRDVTKRKRLY).

This sequence belongs to the bacterial ribosomal protein bS21 family.

The protein is Small ribosomal subunit protein bS21 of Xylella fastidiosa (strain M12).